A 415-amino-acid polypeptide reads, in one-letter code: ATP-dependent RNA helicase RhlB (415 aa).

The Q motif signature appears at 9 to 37 (QRFSALPLHPIVRGALAKKGFDFCTPIQA). The region spanning 40 to 218 (LPISLNGRDV…FEDMNDPEYI (179 aa)) is the Helicase ATP-binding domain. Residue 53–60 (AQTGTGKT) participates in ATP binding. A DEAD box motif is present at residues 164–167 (DEAD). A Helicase C-terminal domain is found at 241–389 (DKMALLLTLM…VSQYETEALL (149 aa)).

Belongs to the DEAD box helicase family. RhlB subfamily. In terms of assembly, component of the RNA degradosome, which is a multiprotein complex involved in RNA processing and mRNA degradation.

Its subcellular location is the cytoplasm. The catalysed reaction is ATP + H2O = ADP + phosphate + H(+). Its function is as follows. DEAD-box RNA helicase involved in RNA degradation. Has RNA-dependent ATPase activity and unwinds double-stranded RNA. In Haemophilus influenzae (strain PittGG), this protein is ATP-dependent RNA helicase RhlB.